The following is a 339-amino-acid chain: Glycerol-3-phosphate dehydrogenase [NAD(P)+] (339 aa).

Positions 11, 12, and 109 each coordinate NADPH. Sn-glycerol 3-phosphate is bound by residues K109, G140, and S142. A144 is a binding site for NADPH. 5 residues coordinate sn-glycerol 3-phosphate: K195, D249, S259, R260, and N261. K195 serves as the catalytic Proton acceptor. R260 is an NADPH binding site. Residues V284 and E286 each coordinate NADPH.

Belongs to the NAD-dependent glycerol-3-phosphate dehydrogenase family.

Its subcellular location is the cytoplasm. It catalyses the reaction sn-glycerol 3-phosphate + NAD(+) = dihydroxyacetone phosphate + NADH + H(+). The enzyme catalyses sn-glycerol 3-phosphate + NADP(+) = dihydroxyacetone phosphate + NADPH + H(+). It functions in the pathway membrane lipid metabolism; glycerophospholipid metabolism. Its function is as follows. Catalyzes the reduction of the glycolytic intermediate dihydroxyacetone phosphate (DHAP) to sn-glycerol 3-phosphate (G3P), the key precursor for phospholipid synthesis. The sequence is that of Glycerol-3-phosphate dehydrogenase [NAD(P)+] from Lactobacillus acidophilus (strain ATCC 700396 / NCK56 / N2 / NCFM).